A 153-amino-acid polypeptide reads, in one-letter code: MNQPSVIKLRELLDLLPHRYPFLLVDKVLSYDIEARSITAQKNVTINEPFFMGHFPNAPIMPGVLILEALAQAAGVLIGLVLENDRNKRIALFLGIQKAKFRQAVRPGDVLTLQADFSLISSKGGKAWAQARVDSQLVTEAELSFALVDKESI.

The active site involves histidine 54.

Belongs to the thioester dehydratase family. FabZ subfamily.

The protein resides in the cytoplasm. The catalysed reaction is a (3R)-hydroxyacyl-[ACP] = a (2E)-enoyl-[ACP] + H2O. Its function is as follows. Involved in unsaturated fatty acids biosynthesis. Catalyzes the dehydration of short chain beta-hydroxyacyl-ACPs and long chain saturated and unsaturated beta-hydroxyacyl-ACPs. The sequence is that of 3-hydroxyacyl-[acyl-carrier-protein] dehydratase FabZ from Chlamydia pneumoniae (Chlamydophila pneumoniae).